The sequence spans 207 residues: Varv peptide A/Kalata-B1 (207 aa).

The N-terminal stretch at 1–20 (MKMFIVLVLSAAFALPAAFA) is a signal peptide. A propeptide spanning residues 21-66 (TEQDVITLQAYEELLKNGAANGMTKTVISSPVLEEALVSYSKNKLG) is cleaved from the precursor. Positions 67–95 (GLPVCGETCVGGTCNTPGCSCSWPVCTRN) form a cross-link, cyclopeptide (Gly-Asn). Cystine bridges form between cysteine 71-cysteine 85, cysteine 75-cysteine 87, and cysteine 80-cysteine 92. Positions 96-120 (SLESTKSANPLLEEALTAFAKKGLG) are excised as a propeptide. Positions 121–149 (GLPVCGETCVGGTCNTPGCTCSWPVCTRN) form a cross-link, cyclopeptide (Gly-Asn). Cystine bridges form between cysteine 125-cysteine 139, cysteine 129-cysteine 141, and cysteine 134-cysteine 146. A propeptide spanning residues 150–174 (ALETQKPNHLLEEALVAFAKKGNLG) is cleaved from the precursor. Residues 175–203 (GLPVCGETCVGGTCNTPGCSCSWPVCTRN) constitute a cross-link (cyclopeptide (Gly-Asn)). Cystine bridges form between cysteine 179–cysteine 193, cysteine 183–cysteine 195, and cysteine 188–cysteine 200. Positions 204-207 (ALAM) are excised as a propeptide.

This sequence belongs to the cyclotide family. Moebius subfamily. Post-translationally, varv peptide A and kalata-B1 are cyclic peptides.

Functionally, probably participates in a plant defense mechanism. Has hemolytic activity. The chain is Varv peptide A/Kalata-B1 from Viola odorata (Sweet violet).